We begin with the raw amino-acid sequence, 147 residues long: UPF0306 protein YPK_3704 (147 aa).

Belongs to the UPF0306 family.

In Yersinia pseudotuberculosis serotype O:3 (strain YPIII), this protein is UPF0306 protein YPK_3704.